The following is a 132-amino-acid chain: Agouti-signaling protein (132 aa).

An N-terminal signal peptide occupies residues 1-22; the sequence is MDVTRLLLATLLVFLCFFTANS. An N-linked (GlcNAc...) asparagine glycan is attached at Asn-39. The disordered stretch occupies residues 62–85; the sequence is IGRKAAEKKRSSKKEASMKKVVRP. The span at 65-79 shows a compositional bias: basic and acidic residues; it reads KAAEKKRSSKKEASM. 5 cysteine pairs are disulfide-bonded: Cys-93–Cys-108, Cys-100–Cys-114, Cys-107–Cys-125, Cys-111–Cys-132, and Cys-116–Cys-123. Residues 93–132 form the Agouti domain; that stretch reads CVATRNSCKPPAPACCDPCASCQCRFFRSACSCRVLSLNC.

Widely expressed at low levels. Highly expressed in the skin. Expressed in adipose tissue.

It is found in the secreted. In terms of biological role, involved in the regulation of melanogenesis. The binding of ASP to MC1R precludes alpha-MSH initiated signaling and thus blocks production of cAMP, leading to a down-regulation of eumelanogenesis (brown/black pigment) and thus increasing synthesis of pheomelanin (yellow/red pigment). In higher primates, agouti may affect the quality of hair pigmentation rather than its pattern of deposition. Could well play a role in neuroendocrine aspects of melanocortin action. May have some functional role in regulating the lipid metabolism with adipocytes. This is Agouti-signaling protein (ASIP) from Homo sapiens (Human).